Here is a 445-residue protein sequence, read N- to C-terminus: AVMGRNLALNIESRGYTVSIFNRSREKTEEVIAENPGKKLVPYYTVKEFVESLETPRRILLMVKAGAGTDAAIDSLKPYLDKGDIIIDGGNTFFQDTIRRNRELSAEGFNFIGTGVSGGEEGALKGPSIMPGGQKEAYELVAPILTKIAAVAEDGEPCVTYIGADGAGHYVKMVHNGIEYGDMQLIAEAYSLLKGGLNLSNEELAQTFTEWNNGELSSYLIDITKDIFTKKDEDGNYLVDVILDEAANKGTGKWTSQSALDLGEPLSLITESVFARYISSLKDQRVAASKVLSGPQAQPAGNKAEFIEKVRRALYLGKIVSYAQGFSQLRAASEEYNWDLNYGEIAKIFRAGCIIRAQFLQKITDAYAENPQIANLLLAPYFKQIADDYQQALRDVVAYAVQNGIPVPTFAAAVAYYDSYRAAVLPANLIQAQRDYFGAHTYKRI.

NADP(+) contacts are provided by residues 1–4, 22–24, 63–65, and N91; these read AVMG, NRS, and VKA. Residues N91 and 117-119 contribute to the substrate site; that span reads SGG. Residue K172 is the Proton acceptor of the active site. 175–176 contacts substrate; the sequence is HN. The Proton donor role is filled by E179. Substrate-binding residues include Y180, K249, R276, R434, and H440.

This sequence belongs to the 6-phosphogluconate dehydrogenase family. As to quaternary structure, homodimer.

It carries out the reaction 6-phospho-D-gluconate + NADP(+) = D-ribulose 5-phosphate + CO2 + NADPH. It functions in the pathway carbohydrate degradation; pentose phosphate pathway; D-ribulose 5-phosphate from D-glucose 6-phosphate (oxidative stage): step 3/3. Catalyzes the oxidative decarboxylation of 6-phosphogluconate to ribulose 5-phosphate and CO(2), with concomitant reduction of NADP to NADPH. This is 6-phosphogluconate dehydrogenase, decarboxylating (gnd) from Shigella boydii.